The following is a 967-amino-acid chain: Probable serine/threonine-protein kinase DDB_G0290621 (967 aa).

Disordered stretches follow at residues 65–122, 215–251, and 287–326; these read EDSD…KEKE, SSLS…SSSS, and QQQL…SPRT. Residues 66 to 94 show a composition bias toward acidic residues; it reads DSDEDDDDEEDEEDEEDSDEEEDDDVVED. Basic and acidic residues predominate over residues 95–122; it reads DNTKDIGKSRDSDKSIKGKEKGKEKEKE. Low complexity predominate over residues 297–326; sequence QQQQQQQQQQQQQNNSMLQQSNNNNISPRT. In terms of domain architecture, Protein kinase spans 345–610; sequence FNDSNKIGEG…EIRSRLSEII (266 aa). Residues 351–359 and lysine 368 contribute to the ATP site; that span reads IGEGGQCSI. Aspartate 467 acts as the Proton acceptor in catalysis. 3 disordered regions span residues 634–667, 700–752, and 862–882; these read DDSL…NNNN, STSN…NNNI, and TSSS…NPSN. The segment covering 639-666 has biased composition (low complexity); the sequence is NNNNNNNQNNNNQNNNNNNNNNNNNNNN. Residues 863–882 are compositionally biased toward low complexity; it reads SSSSNKNNNNNNNDNNNPSN.

The protein belongs to the protein kinase superfamily. TKL Ser/Thr protein kinase family.

It carries out the reaction L-seryl-[protein] + ATP = O-phospho-L-seryl-[protein] + ADP + H(+). It catalyses the reaction L-threonyl-[protein] + ATP = O-phospho-L-threonyl-[protein] + ADP + H(+). The protein is Probable serine/threonine-protein kinase DDB_G0290621 of Dictyostelium discoideum (Social amoeba).